Reading from the N-terminus, the 200-residue chain is Small ribosomal subunit protein mS26 (200 aa).

The N-terminal 27 residues, 1–27 (MLRALNRLAARPGGQPPTLLLLPVRGR), are a transit peptide targeting the mitochondrion. K159 bears the N6-acetyllysine mark.

This sequence belongs to the mitochondrion-specific ribosomal protein mS26 family. As to quaternary structure, component of the mitochondrial ribosome small subunit (28S) which comprises a 12S rRNA and about 30 distinct proteins.

Its subcellular location is the mitochondrion. The protein is Small ribosomal subunit protein mS26 (Mrps26) of Rattus norvegicus (Rat).